Consider the following 181-residue polypeptide: Inorganic pyrophosphatase (181 aa).

Positions 16, 30, and 42 each coordinate substrate. Mg(2+)-binding residues include D52, D57, and D89. Y126 provides a ligand contact to substrate.

The protein belongs to the PPase family. In terms of assembly, homohexamer. Mg(2+) is required as a cofactor.

The protein resides in the cytoplasm. It catalyses the reaction diphosphate + H2O = 2 phosphate + H(+). In terms of biological role, catalyzes the hydrolysis of inorganic pyrophosphate (PPi) forming two phosphate ions. The protein is Inorganic pyrophosphatase of Malacoplasma penetrans (strain HF-2) (Mycoplasma penetrans).